A 316-amino-acid polypeptide reads, in one-letter code: Ribosomal RNA large subunit methyltransferase F (316 aa).

It belongs to the methyltransferase superfamily. METTL16/RlmF family.

The protein localises to the cytoplasm. The enzyme catalyses adenosine(1618) in 23S rRNA + S-adenosyl-L-methionine = N(6)-methyladenosine(1618) in 23S rRNA + S-adenosyl-L-homocysteine + H(+). In terms of biological role, specifically methylates the adenine in position 1618 of 23S rRNA. This is Ribosomal RNA large subunit methyltransferase F from Pseudomonas entomophila (strain L48).